A 2363-amino-acid polypeptide reads, in one-letter code: Spectrin beta chain, non-erythrocytic 1 (2363 aa).

Thr-2 carries the N-acetylthreonine modification. The segment at 2–275 (TTTVATDYDN…IITYVVTYYH (274 aa)) is actin-binding. Phosphoserine occurs at positions 14 and 36. Calponin-homology (CH) domains follow at residues 54–158 (AVQK…LRFQ) and 173–278 (KSAK…HYFS). An N6-acetyllysine modification is found at Lys-90. Position 228 is a phosphoserine (Ser-228). Spectrin repeat units follow at residues 303–411 (MIEK…LALR), 423–525 (LARR…QRLE), 530–636 (LQKI…RLEE), 639–742 (RLWK…RLEE), 745–847 (LLHQ…ALQD), 850–952 (ALYK…DALL), 957–1060 (IQNY…SLGE), 1063–1166 (KLQQ…NLLS), 1170–1259 (AYQQ…RHRK), 1276–1376 (DLQK…AQRL), 1381–1482 (KAEL…HNLL), 1486–1590 (EIHQ…RLEE), 1592–1696 (HKAQ…KLDE), 1698–1801 (HRLF…TQIL), and 1805–1907 (YELH…RVRL). A phosphoserine mark is found at Ser-817, Ser-903, Ser-1057, Ser-1076, Ser-1079, and Ser-1237. Phosphoserine occurs at positions 1388, 1447, and 1557. An interaction with ANK2 region spans residues 1563 to 2093 (IRQRLADLKQ…LLEVRRQQEE (531 aa)). Tyr-1805 is modified (phosphotyrosine). Residues Lys-1815, Lys-1913, and Lys-1989 each carry the N6-acetyllysine modification. 2 Spectrin repeats span residues 1914–2014 (FRFF…EWLR) and 2018–2097 (EVHQ…EERK). A disordered region spans residues 2089–2193 (RQQEEEERKR…AATLPARTLE (105 aa)). Phosphoserine is present on residues Ser-2102, Ser-2127, and Ser-2137. Residues 2115-2130 (SQQWDTSKGDQVSQNG) are compositionally biased toward polar residues. At Thr-2146 the chain carries Phosphothreonine. Position 2147 is a phosphoserine (Ser-2147). A mediates interaction with CAMSAP1 region spans residues 2148–2176 (EMVNGAAEQRTSSKESSPVPSPTLDRKAK). A Phosphothreonine modification is found at Thr-2158. Phosphoserine is present on residues Ser-2159, Ser-2160, Ser-2163, Ser-2164, and Ser-2168. Residue Thr-2170 is modified to Phosphothreonine. At Ser-2183 the chain carries Phosphoserine. Phosphothreonine occurs at positions 2186 and 2194. A PH domain is found at 2196 to 2306 (AAQMEGFLNR…WIQAISSAIS (111 aa)). Residues 2308 to 2363 (DKHDTSASTQSTPASSRAQTLPTSVVTITSESSPGKREKDKEKDKEKRFSLFGKKK) form a disordered region. A phosphoserine mark is found at Ser-2313 and Ser-2318. Positions 2313-2327 (SASTQSTPASSRAQT) are enriched in low complexity. Residue Thr-2319 is modified to Phosphothreonine. Ser-2323 carries an O-linked (GlcNAc) serine glycan. At Thr-2327 the chain carries Phosphothreonine. Positions 2328–2340 (LPTSVVTITSESS) are enriched in polar residues. Ser-2339 and Ser-2340 each carry phosphoserine. The segment covering 2341-2356 (PGKREKDKEKDKEKRF) has biased composition (basic and acidic residues).

This sequence belongs to the spectrin family. Interacts with ANK2. Interacts with CPNE4 (via VWFA domain). Like erythrocyte spectrin, the spectrin-like proteins are capable to form dimers which can further associate to tetramers. Interacts with CAMSAP1. Can form heterodimers with SPTAN1. As to expression, isoform 2 is present in brain, heart, kidney and liver (at protein level).

It localises to the cytoplasm. Its subcellular location is the cytoskeleton. The protein localises to the endomembrane system. The protein resides in the myofibril. It is found in the sarcomere. It localises to the m line. Its subcellular location is the cytosol. The protein localises to the cell membrane. Fodrin, which seems to be involved in secretion, interacts with calmodulin in a calcium-dependent manner and is thus candidate for the calcium-dependent movement of the cytoskeleton at the membrane. Plays a critical role in central nervous system development and function. The sequence is that of Spectrin beta chain, non-erythrocytic 1 (Sptbn1) from Mus musculus (Mouse).